Reading from the N-terminus, the 383-residue chain is Activator of 90 kDa heat shock protein ATPase homolog (383 aa).

Disordered stretches follow at residues Lys97–Glu126 and Glu209–Asn228.

It belongs to the AHA1 family. In terms of assembly, interacts with hspD/HSP90.

The protein resides in the cytoplasm. Functionally, co-chaperone that stimulates hspD/HSP90 ATPase activity. This is Activator of 90 kDa heat shock protein ATPase homolog (ahsa) from Dictyostelium discoideum (Social amoeba).